The chain runs to 60 residues: Potassium channel toxin alpha-KTx 29.1 (60 aa).

Positions 1-28 (MKSVCGVLIILVVLTTMLSISTFSTVGA) are cleaved as a signal peptide. Cystine bridges form between cysteine 32-cysteine 51, cysteine 40-cysteine 56, and cysteine 44-cysteine 58.

The protein belongs to the short scorpion toxin superfamily. Potassium channel inhibitor family. Alpha-KTx 29 subfamily. As to expression, expressed by the venom gland.

Its subcellular location is the secreted. Weakly inhibits the Kv1.3/KCNA3 channel (1 uM of the toxin inhibits currents by 13.2%) and Kv7.1/KCNQ1 channel (10 uM of the toxin inhibits currents by 27.7%). The protein is Potassium channel toxin alpha-KTx 29.1 of Lychas mucronatus (Chinese swimming scorpion).